Here is a 343-residue protein sequence, read N- to C-terminus: Twinfilin (343 aa).

ADF-H domains follow at residues 11-135 (EQLA…EGYR) and 184-312 (EATV…DELH). Residues 319–343 (RPAFAKPKGPPNRGAKRLTRPTAED) form a disordered region.

The protein belongs to the actin-binding proteins ADF family. Twinfilin subfamily. As to quaternary structure, interacts with G-actin; ADP-actin form.

The protein resides in the cytoplasm. Its subcellular location is the cytoskeleton. The protein localises to the cell cortex. Its function is as follows. Actin-binding protein involved in motile and morphological processes. Inhibits actin polymerization, likely by sequestering G-actin. This Drosophila melanogaster (Fruit fly) protein is Twinfilin (twf).